The primary structure comprises 345 residues: Guanine nucleotide-binding protein G(i) subunit alpha-3 (345 aa).

Residues 23–345 form the G-alpha domain; it reads KEVKLLLLGA…KSNLMECGLY (323 aa). Residues 26–39 form a G1 motif region; that stretch reads KLLLLGAGESGKST. Gly-33, Glu-34, Ser-35, Gly-36, Lys-37, Ser-38, Thr-39, Asp-141, Ser-142, Leu-166, Arg-167, Thr-168, Arg-169, Val-170, Lys-171, Thr-172, Val-192, Gly-194, Asn-260, Lys-261, Asp-263, Leu-264, Cys-316, Ala-317, and Thr-318 together coordinate GTP. Ser-38 provides a ligand contact to Mg(2+). Residues 164–172 form a G2 motif region; the sequence is DVLRTRVKT. Residue Thr-172 participates in Mg(2+) binding. The tract at residues 187-196 is G3 motif; sequence FKMFDVGGQR. Residues 256-263 form a G4 motif region; that stretch reads ILFLNKKD. The interval 315–320 is G5 motif; it reads TCATDT.

Belongs to the G-alpha family. G(i/o/t/z) subfamily. In terms of assembly, heterotrimeric G proteins are composed of 3 units; alpha, beta and gamma. The alpha subunit contains the guanine nucleotide binding site. GTP binding causes dissociation of the heterotrimer, liberating the individual subunits so that they can interact with downstream effector proteins.

The protein localises to the cytoplasm. It is found in the cell membrane. The protein resides in the cytoskeleton. It localises to the microtubule organizing center. Its subcellular location is the centrosome. The protein localises to the membrane. Heterotrimeric guanine nucleotide-binding proteins (G proteins) function as transducers downstream of G protein-coupled receptors (GPCRs) in numerous signaling cascades. The alpha chain contains the guanine nucleotide binding site and alternates between an active, GTP-bound state and an inactive, GDP-bound state. Signaling by an activated GPCR promotes GDP release and GTP binding. The alpha subunit has a low GTPase activity that converts bound GTP to GDP, thereby terminating the signal. Both GDP release and GTP hydrolysis are modulated by numerous regulatory proteins. Signaling is mediated via effector proteins, such as adenylate cyclase. Inhibits adenylate cyclase activity, leading to decreased intracellular cAMP levels. Stimulates the activity of receptor-regulated K(+) channels. The active GTP-bound form prevents the association of RGS14 with centrosomes and is required for the translocation of RGS14 from the cytoplasm to the plasma membrane. May play a role in cell division. The active GTP-bound form activates the calcium permeant TRPC5 ion channels. The protein is Guanine nucleotide-binding protein G(i) subunit alpha-3 (gnai3) of Xenopus laevis (African clawed frog).